The sequence spans 444 residues: Spermidine/putrescine import ATP-binding protein PotA (444 aa).

The ABC transporter domain occupies 11–332; that stretch reads ISLVDVDKEF…PVNKWVANFI (322 aa). 43–50 serves as a coordination point for ATP; the sequence is GPSGSGKT. Positions 111–201 are insert; sequence RIKKKAEEIP…ESFKKKYLTR (91 aa).

Belongs to the ABC transporter superfamily. Spermidine/putrescine importer (TC 3.A.1.11.1) family. As to quaternary structure, the complex is composed of two ATP-binding proteins (PotA), two transmembrane proteins (PotB and PotC) and a solute-binding protein (PotD).

It is found in the cell membrane. It carries out the reaction ATP + H2O + polyamine-[polyamine-binding protein]Side 1 = ADP + phosphate + polyamineSide 2 + [polyamine-binding protein]Side 1.. Functionally, part of the ABC transporter complex PotABCD involved in spermidine/putrescine import. Responsible for energy coupling to the transport system. In Mesomycoplasma hyopneumoniae (strain J / ATCC 25934 / NCTC 10110) (Mycoplasma hyopneumoniae), this protein is Spermidine/putrescine import ATP-binding protein PotA.